The primary structure comprises 267 residues: Cyclin-C (267 aa).

A Cyclin N-terminal domain is found at 48 to 151 (IQVLGEQLKL…LLENLDCCLI (104 aa)).

The protein belongs to the cyclin family. Cyclin C subfamily. As to quaternary structure, component of the Cdk8 module of the Mediator complex.

The protein resides in the nucleus. Functionally, component of the Mediator complex, a coactivator involved in regulated gene transcription of nearly all RNA polymerase II-dependent genes. Mediator functions as a bridge to convey information from gene-specific regulatory proteins to the basal RNA polymerase II transcription machinery. Mediator is recruited to promoters by direct interactions with regulatory proteins and serves as a scaffold for the assembly of a functional preinitiation complex with RNA polymerase II and the general transcription factors. Binds to and activates cyclin-dependent kinase Cdk8 that phosphorylates the CTD (C-terminal domain) of the large subunit of RNA polymerase II (RNAp II), which may inhibit the formation of a transcription initiation complex. The protein is Cyclin-C (CycC) of Drosophila pseudoobscura pseudoobscura (Fruit fly).